Reading from the N-terminus, the 29-residue chain is GSPLTYPCHSAQCEQPCKDANMRFGXCMN.

A disulfide bridge connects residues Cys-8 and Cys-27.

It belongs to the short scorpion toxin superfamily. Potassium channel inhibitor family. Alpha-KTx 03 subfamily. As to expression, expressed by the venom gland.

The protein localises to the secreted. Functionally, may play a role in blocking voltage-gated potassium channels Kv1.1/KCNA1, Kv1.3/KCNA3 and Kv1.6/KCNA6. The protein is Potassium channel toxin alpha-KTx 3.15 of Mesobuthus gibbosus (Mediterranean checkered scorpion).